Reading from the N-terminus, the 1959-residue chain is Zinc finger protein hangover (1959 aa).

Residues 79–155 form the ZAD domain; the sequence is NCCRLCIAPQ…FSSQAKQRQW (77 aa). Zn(2+) contacts are provided by Cys81, Cys84, Cys128, and Cys131. The segment at 178-208 is disordered; it reads GFFDQHLHQQQQHHQHLENELEAEKEKATPT. A compositionally biased stretch (basic and acidic residues) spans 192 to 205; that stretch reads QHLENELEAEKEKA. Ser228 bears the Phosphoserine mark. Thr246 carries the phosphothreonine modification. The segment at 318–341 adopts a C2H2-type 1 zinc-finger fold; the sequence is ASCRACSLQFSTRANARRHERNLH. The C2H2-type 2; degenerate zinc-finger motif lies at 447–469; it reads MTCRCCNKYFSTYKNFMAHVRKK. The segment at 581 to 604 adopts a C2H2-type 3 zinc-finger fold; the sequence is YECKLCPKGFRTKHEFRTHVYDKH. Positions 674–762 are disordered; it reads AVSDNASTTG…ANRDASAPKS (89 aa). Residues 677 to 693 are compositionally biased toward polar residues; it reads DNASTTGSGMARSNSME. A Phosphoserine modification is found at Ser680. Composition is skewed to low complexity over residues 716 to 727 and 741 to 759; these read SSSAAPPLTSTP and TSAS…DASA. C2H2-type zinc fingers lie at residues 770-793 and 801-824; these read QVCP…ESKH and YKCV…INVH. Phosphoserine is present on residues Ser832, Ser894, Ser895, Ser898, and Ser899. The C2H2-type 6 zinc-finger motif lies at 908-930; that stretch reads KECPICNAVFSNNIGLSNHMRSH. The interval 960 to 991 is disordered; it reads TDSELGVGGTMSESAPATPANVPPAMANQTPQ. 5 consecutive C2H2-type zinc fingers follow at residues 1011-1034, 1042-1065, 1078-1101, 1154-1176, and 1184-1207; these read MRCR…LTDH, IKCK…FKVH, FECD…RSVH, YQCK…INSH, and YSCK…YKKH. Over residues 1233–1253 the composition is skewed to polar residues; that stretch reads TPTCNRKPITSTGAHQQQDGQ. Residues 1233 to 1301 are disordered; the sequence is TPTCNRKPIT…GNGTTVGVAS (69 aa). Residues 1255 to 1267 show a composition bias toward basic residues; the sequence is HSHHTAKRTIFRH. The span at 1271–1283 shows a compositional bias: acidic residues; sequence DDDDEEDDDEQQQ. C2H2-type zinc fingers lie at residues 1318-1340 and 1375-1397; these read VACT…IQKH and YACD…RKWH. A compositionally biased stretch (low complexity) spans 1445-1467; it reads QQSLNNSCNSSMNHNNNSSSNRS. The tract at residues 1445 to 1471 is disordered; that stretch reads QQSLNNSCNSSMNHNNNSSSNRSKSMK. C2H2-type zinc fingers lie at residues 1476–1499 and 1552–1574; these read LKCE…YELH and WGCD…INNH. The tract at residues 1627–1865 is disordered; sequence AAGATTTDKL…STGERRKKAV (239 aa). Acidic residues predominate over residues 1639–1695; the sequence is PDEEDSDDLDEDSSGDDDDSSGTGDDDDDDDSDDDEDGEGEDEDEEGDGGEGEDEEG. Residues 1697–1715 are compositionally biased toward low complexity; sequence QPPAQLLPQQQHKTDLNLN. Acidic residues-rich tracts occupy residues 1716 to 1758 and 1782 to 1829; these read QDDD…EEPE and SDDE…EDEP. Residues 1833 to 1851 show a composition bias toward low complexity; sequence STASFSESESSTTTTSNSH. A C2H2-type 16 zinc finger spans residues 1873–1895; that stretch reads FTCDLCQLCFDSQELLQSHIKSH. Residues 1933–1959 form a disordered region; it reads PDSKSAVLANNNNSKTSSKTVAAGATN. A compositionally biased stretch (low complexity) spans 1942-1952; it reads NNNNSKTSSKT.

As to expression, expressed ubiquitously in the nervous system, in neurons not glia.

It is found in the nucleus. In terms of biological role, required for normal development of ethanol tolerance. Relies on two distinct molecular pathways: a cellular stress pathway defined by hang, and a parallel pathway requiring octopamine. This Drosophila melanogaster (Fruit fly) protein is Zinc finger protein hangover (hang).